The following is a 168-amino-acid chain: Cyclin-dependent kinase 4 inhibitor C (168 aa).

ANK repeat units follow at residues 4-33 (PWGNELASAAARGDLEQLTSLLQNNVNVNA), 37-65 (FGRTALQVMKLGNPEIARRLLLRGANPDL), 69-98 (TGFAVIHDAARAGFLDTLQTLLEFQADVNI), and 102-132 (EGNLPLHLAAKEGHLRVVEFLVKHTASNVGH).

It belongs to the CDKN2 cyclin-dependent kinase inhibitor family. Heterodimer of p18 with CDK6. Highest levels found in skeletal muscle. Also found in pancreas and heart.

In terms of biological role, interacts strongly with CDK6, weakly with CDK4. Inhibits cell growth and proliferation with a correlated dependence on endogenous retinoblastoma protein RB. The protein is Cyclin-dependent kinase 4 inhibitor C (CDKN2C) of Homo sapiens (Human).